The primary structure comprises 145 residues: Probable 4-amino-4-deoxy-L-arabinose-phosphoundecaprenol flippase subunit ArnF (145 aa).

The Cytoplasmic portion of the chain corresponds to 1–3 (MAH). A helical membrane pass occupies residues 4–24 (LTLSIRGLLLALMSVLLISVA). Residues 25-61 (QLSMKWGMGTLNQLWSDLVMLWQGEDYSSLFSQALAP) lie on the Periplasmic side of the membrane. A helical transmembrane segment spans residues 62 to 82 (VMAVGAGLFCYALSMACWVMA). Over 83-89 (LKRLPLS) the chain is Cytoplasmic. A helical membrane pass occupies residues 90–110 (IAYPLLSLSYVLVYLGAVYLP). Over 111 to 114 (WLNE) the chain is Periplasmic. Residues 115–135 (PLSWVKGTGIFLILLGLIFVL) traverse the membrane as a helical segment. Topologically, residues 136 to 145 (PKKNQTSDKS) are cytoplasmic.

It belongs to the ArnF family. As to quaternary structure, heterodimer of ArnE and ArnF.

The protein localises to the cell inner membrane. Its pathway is bacterial outer membrane biogenesis; lipopolysaccharide biosynthesis. Functionally, translocates 4-amino-4-deoxy-L-arabinose-phosphoundecaprenol (alpha-L-Ara4N-phosphoundecaprenol) from the cytoplasmic to the periplasmic side of the inner membrane. This chain is Probable 4-amino-4-deoxy-L-arabinose-phosphoundecaprenol flippase subunit ArnF, found in Shewanella sediminis (strain HAW-EB3).